The sequence spans 96 residues: MPAIEVGRICVKVKGREAGSKCVIVDIIDDNFVLVTGPKDITGVKRRRVNILHLEPTDKKIDIQKGASDEEVKKKLEESNLTEYMKEKIKIRMPTL.

Belongs to the eukaryotic ribosomal protein eL14 family.

The protein is Large ribosomal subunit protein eL14 of Saccharolobus solfataricus (strain ATCC 35092 / DSM 1617 / JCM 11322 / P2) (Sulfolobus solfataricus).